A 172-amino-acid polypeptide reads, in one-letter code: MALRIEDKKAIVAEVAEQVSSALSAAVADYRGLTVNEMTSLRKQARESGVYLRVVRNNLARLAIKGTEFECLADALKGPLVLALSKDEPGAAAKLFKNFQKDHNAFEVKNLAMSGELFGPEKLDDFAKLPTREEALATLLNVMQAPVTKFVRTLNEIPSQAVRVFAAVGDSK.

Belongs to the universal ribosomal protein uL10 family. Part of the ribosomal stalk of the 50S ribosomal subunit. The N-terminus interacts with L11 and the large rRNA to form the base of the stalk. The C-terminus forms an elongated spine to which L12 dimers bind in a sequential fashion forming a multimeric L10(L12)X complex.

In terms of biological role, forms part of the ribosomal stalk, playing a central role in the interaction of the ribosome with GTP-bound translation factors. In Francisella tularensis subsp. tularensis (strain FSC 198), this protein is Large ribosomal subunit protein uL10.